The chain runs to 131 residues: MSAKTEEILESLKSLSLLEASELVKQIEEAFGVSAAASAGVVMAAPGAAGGDADGGAAEEKTEFDVVLESFDAAAKIKVLKVVRNATGLGLGDAKALVESAPKTVKEGIAKADAESLKKEIEEAGGKVTLK.

It belongs to the bacterial ribosomal protein bL12 family. Homodimer. Part of the ribosomal stalk of the 50S ribosomal subunit. Forms a multimeric L10(L12)X complex, where L10 forms an elongated spine to which 2 to 4 L12 dimers bind in a sequential fashion. Binds GTP-bound translation factors.

Forms part of the ribosomal stalk which helps the ribosome interact with GTP-bound translation factors. Is thus essential for accurate translation. This Prochlorococcus marinus (strain MIT 9301) protein is Large ribosomal subunit protein bL12.